A 317-amino-acid polypeptide reads, in one-letter code: Pantothenate kinase (317 aa).

Position 99–106 (99–106 (GSVSVGKS)) interacts with ATP.

This sequence belongs to the prokaryotic pantothenate kinase family.

It localises to the cytoplasm. The catalysed reaction is (R)-pantothenate + ATP = (R)-4'-phosphopantothenate + ADP + H(+). It functions in the pathway cofactor biosynthesis; coenzyme A biosynthesis; CoA from (R)-pantothenate: step 1/5. The chain is Pantothenate kinase from Histophilus somni (strain 2336) (Haemophilus somnus).